A 461-amino-acid polypeptide reads, in one-letter code: tRNA modification GTPase MnmE (461 aa).

The (6S)-5-formyl-5,6,7,8-tetrahydrofolate site is built by R27, E89, and R128. One can recognise a TrmE-type G domain in the interval 224–382 (GLKTAIVGRP…LEALIKKLFF (159 aa)). Position 234 (N234) interacts with K(+). Residues 234 to 239 (NVGKSS), 253 to 259 (TDVAGTT), and 278 to 281 (DTAG) contribute to the GTP site. S238 is a binding site for Mg(2+). Positions 253, 255, and 258 each coordinate K(+). T259 provides a ligand contact to Mg(2+). K461 contributes to the (6S)-5-formyl-5,6,7,8-tetrahydrofolate binding site.

It belongs to the TRAFAC class TrmE-Era-EngA-EngB-Septin-like GTPase superfamily. TrmE GTPase family. Homodimer. Heterotetramer of two MnmE and two MnmG subunits. The cofactor is K(+).

It is found in the cytoplasm. Exhibits a very high intrinsic GTPase hydrolysis rate. Involved in the addition of a carboxymethylaminomethyl (cmnm) group at the wobble position (U34) of certain tRNAs, forming tRNA-cmnm(5)s(2)U34. The sequence is that of tRNA modification GTPase MnmE from Lactobacillus delbrueckii subsp. bulgaricus (strain ATCC BAA-365 / Lb-18).